Here is a 260-residue protein sequence, read N- to C-terminus: Late transcription factor 1 (260 aa).

This sequence belongs to the chordopoxvirinae VLTF-1 family. Interacts with the late transcription factors VLTF-2 and VLTF-3. Interacts with the late transcription elongation factor VLTF-4. Interacts with itself.

Its function is as follows. Associates with RNA polymerase to initiate transcription from late gene promoters. The sequence is that of Late transcription factor 1 (OPG093) from Homo sapiens (Human).